The sequence spans 184 residues: ATP synthase subunit b, chloroplastic (184 aa).

Residues 29–49 (INIINLGIVIGLLVYLGEGVL) form a helical membrane-spanning segment.

It belongs to the ATPase B chain family. In terms of assembly, F-type ATPases have 2 components, F(1) - the catalytic core - and F(0) - the membrane proton channel. F(1) has five subunits: alpha(3), beta(3), gamma(1), delta(1), epsilon(1). F(0) has four main subunits: a(1), b(1), b'(1) and c(10-14). The alpha and beta chains form an alternating ring which encloses part of the gamma chain. F(1) is attached to F(0) by a central stalk formed by the gamma and epsilon chains, while a peripheral stalk is formed by the delta, b and b' chains.

It is found in the plastid. The protein resides in the chloroplast thylakoid membrane. Its function is as follows. F(1)F(0) ATP synthase produces ATP from ADP in the presence of a proton or sodium gradient. F-type ATPases consist of two structural domains, F(1) containing the extramembraneous catalytic core and F(0) containing the membrane proton channel, linked together by a central stalk and a peripheral stalk. During catalysis, ATP synthesis in the catalytic domain of F(1) is coupled via a rotary mechanism of the central stalk subunits to proton translocation. Functionally, component of the F(0) channel, it forms part of the peripheral stalk, linking F(1) to F(0). This is ATP synthase subunit b, chloroplastic from Psilotum nudum (Whisk fern).